The sequence spans 329 residues: Type 2 lactosamine alpha-2,3-sialyltransferase (329 aa).

At 1–4 (MKGY) the chain is on the cytoplasmic side. The helical; Signal-anchor for type II membrane protein transmembrane segment at 5-25 (LVAIFLSSIFLYYVLYCILWG) threads the bilayer. The Lumenal portion of the chain corresponds to 26–329 (TNGYWFPAEE…IKKKMVINLT (304 aa)). 4 N-linked (GlcNAc...) asparagine glycosylation sites follow: Asn129, Asn181, Asn295, and Asn308.

Belongs to the glycosyltransferase 29 family.

Its subcellular location is the golgi apparatus membrane. It carries out the reaction a neolactoside nLc4Cer(d18:1(4E)) + CMP-N-acetyl-beta-neuraminate = a neolactoside IV(3)-alpha-NeuAc-nLc4Cer(d18:1(4E)) + CMP + H(+). It catalyses the reaction a beta-D-galactosyl-(1-&gt;4)-N-acetyl-beta-D-glucosaminyl derivative + CMP-N-acetyl-beta-neuraminate = an N-acetyl-alpha-neuraminyl-(2-&gt;3)-beta-D-galactosyl-(1-&gt;4)-N-acetyl-beta-D-glucosaminyl derivative + CMP + H(+). The catalysed reaction is a neolactoside nLc6Cer(d18:1(4E)) + CMP-N-acetyl-beta-neuraminate = a neolactoside VI(3)-alpha-NeuNAc-nLc6Cer(d18:1(4E)) + CMP + H(+). In terms of biological role, transfers the sialyl residue from CMP-N-acetyl-beta-neuraminate to the terminal galactose residue on sugar chains of glycoproteins and glycolipids. It's alpha-2,3-sialyltransferase activity is specific toward type II glycan chains (Galbeta1-4GlcNAc) on glycoproteins and glycolipids such as neolactosides nLc4Cer and nLc6Cer, whose sialyl-products serve as precursors for the Lewis X antigen. Critically involved in the synthesis of functional selectin ligands needed for neutrophil recruitment during inflammation and lymphocyte homing to the lymph nodes. The polypeptide is Type 2 lactosamine alpha-2,3-sialyltransferase (St3gal6) (Mus musculus (Mouse)).